A 93-amino-acid polypeptide reads, in one-letter code: uncharacterized protein (93 aa).

This is an uncharacterized protein from Saccharomyces cerevisiae (strain ATCC 204508 / S288c) (Baker's yeast).